Here is a 304-residue protein sequence, read N- to C-terminus: L-xylo-3-hexulose reductase (304 aa).

NADP(+) contacts are provided by Ile-19, Asp-68, and Asn-107. Catalysis depends on proton donor residues Ser-163 and Ser-164. NADP(+) contacts are provided by Tyr-177, Lys-181, and Ala-209. The Proton acceptor role is filled by Tyr-177. Lys-181 (lowers pKa of active site Tyr) is an active-site residue.

Belongs to the short-chain dehydrogenases/reductases (SDR) family.

The catalysed reaction is D-sorbitol + NADP(+) = L-xylo-3-hexulose + NADPH + H(+). The protein operates within carbohydrate degradation. Its function is as follows. L-xylulose reductase involved in the catabolism of D-galactose through an oxidoreductive pathway. Catalyzes the NADPH-dependent reduction of L-xylo-3-hexulose. Is also active with D-ribulose and L-xylulose, and to a lesser extent with D-xylulose, D-fructose and L- and D-sorbose. In the reverse reaction, shows activity with D-sorbitol and D-mannitol, low activity with xylitol, but no activity with galactitol, ribitol, and L- and D-arabitol. In Hypocrea jecorina (strain QM6a) (Trichoderma reesei), this protein is L-xylo-3-hexulose reductase.